We begin with the raw amino-acid sequence, 1055 residues long: MAPAATAAASSGKGSFDLATLFVADKAARDEAGLALADAVKKSGVEFFTQIGFNDAIVKALNDKKSQSAREGACEVISTLCENGAAQLLEPHVISSAENTPFPALLEAFADKVAAVKTAAIAAVKAIVQSMNPWASFVLLPALLNLIRTSGKWQIKAGSLEILQQLITSAPFQMGEAMPDLVPVLAEAVWDTKSDVKKAAKATLEKAVSLVENKDIEKFVPALVKSLLNPIEEVPKTISLLSATTFVSEVTAPTISLIAPLLIRGLDERPTATKRKVCVIADNMSKLVDSEYTVRPFLPQLLPRLIKTSETIADPEARSVANRAIVTLRRIGKVPAESDGSDLPPLPVAEGPHLATNFVALVKKHGGVSVEQTNPGLAYAGVLAASLVNHHNFDQKTWESTLPPYLKLALPSYDSLPAVRELLQKKADEAETDDAKFPDEEEGEDLCNIEQFNLAYGAKILLHHANMRLKRGHRYGLCGRNGSGKSTLMNAIINNQVEGFPPPTEVRTFYVQHDIDGSEAEISILDWVLGDKRLLATPDEIKSTLESVGFDEVKQKNSIGSLSGGWKMKLALARAILFKADILLLDEPTNHLDVLNVDWLINYLTSLTRCTSIIVSHDSDFLNRTVTDVLHLNNFKLKRYPGNLEDFVQHVPEAKSYYQLDVAEDYQFKLPNPPLLDGVKTKEKSLLKMRNVSFQYPGSSIQQLYDISLQVSLSSRVAILGPNGSGKSTLVKLLTGETEPNLGGQVWKHPNLVIGYVAQHAFHHIDNHLDSTPLEYMLWRYQTGEDLEEMHKANRVMTEAEIAKMKEGATVIKDGVKRIIDELVARKKLKQSYEYEVSFKGMSSAENIWISRDELVARGFEKKVMELDTREAQRLGLMRPLVRREIEKHFEDFGLDAEFVSHNSMRGLSGGQKVKVVLGAATWRRPHIICLDEPTNYLDRESLAALIAALKNFEGGVLIITHNREFSESICTEVWAMREGYLEASGHNWVEGQGSGERIDKKAADDDEVEYDALGNPIVKAKKEKKLSAADKRKAKKDRMARRKRGEEVFSDEEL.

V45 contacts ADP. HEAT repeat units follow at residues 48-86, 96-133, 134-172, 176-213, 218-255, 257-290, and 296-337; these read FTQI…NGAA, SAEN…SMNP, WASF…SAPF, EAMP…LVEN, KFVP…APTI, LIAP…LVDS, and PFLP…VPAE. 2 ABC transporter domains span residues 447-659 and 687-1004; these read CNIE…SYYQ and LKMR…KKAA. ADP contacts are provided by N723, E933, N936, and H962. The segment at 1024 to 1055 is disordered; sequence EKKLSAADKRKAKKDRMARRKRGEEVFSDEEL. Basic residues predominate over residues 1033–1044; the sequence is RKAKKDRMARRK.

The protein belongs to the ABC transporter superfamily. ABCF family. EF3 subfamily. Interacts with CCH1; the interaction is direct and required for the localization of CCH1 to the cell membrane.

It is found in the cytoplasm. It localises to the cytosol. The catalysed reaction is ATP + H2O = ADP + phosphate + H(+). Its pathway is protein biosynthesis; polypeptide chain elongation. Its function is as follows. Ribosome-dependent ATPase that functions in cytoplasmic translation elongation. Required for the ATP-dependent release of deacylated tRNA from the ribosomal E-site during protein biosynthesis. Stimulates the eEF1A-dependent binding of aminoacyl-tRNA to the ribosomal A-site, which has reduced affinity for tRNA as long as the E-site is occupied. Assists translation termination by stimulating the release of nascent protein from the ribosome by release factors. Appears to localize calcium-channel protein CCH1 to the plasma membrane. In Cryptococcus neoformans var. grubii serotype A (strain H99 / ATCC 208821 / CBS 10515 / FGSC 9487) (Filobasidiella neoformans var. grubii), this protein is Elongation factor 3.